The chain runs to 250 residues: 5'/3'-nucleotidase SurE (250 aa).

Residues D9, D10, S40, and N93 each coordinate a divalent metal cation.

This sequence belongs to the SurE nucleotidase family. A divalent metal cation serves as cofactor.

It localises to the cytoplasm. It carries out the reaction a ribonucleoside 5'-phosphate + H2O = a ribonucleoside + phosphate. The enzyme catalyses a ribonucleoside 3'-phosphate + H2O = a ribonucleoside + phosphate. The catalysed reaction is [phosphate](n) + H2O = [phosphate](n-1) + phosphate + H(+). Its function is as follows. Nucleotidase with a broad substrate specificity as it can dephosphorylate various ribo- and deoxyribonucleoside 5'-monophosphates and ribonucleoside 3'-monophosphates with highest affinity to 3'-AMP. Also hydrolyzes polyphosphate (exopolyphosphatase activity) with the preference for short-chain-length substrates (P20-25). Might be involved in the regulation of dNTP and NTP pools, and in the turnover of 3'-mononucleotides produced by numerous intracellular RNases (T1, T2, and F) during the degradation of various RNAs. This Yersinia enterocolitica serotype O:8 / biotype 1B (strain NCTC 13174 / 8081) protein is 5'/3'-nucleotidase SurE.